Reading from the N-terminus, the 624-residue chain is DNA mismatch repair protein MutL (624 aa).

Belongs to the DNA mismatch repair MutL/HexB family.

Its function is as follows. This protein is involved in the repair of mismatches in DNA. It is required for dam-dependent methyl-directed DNA mismatch repair. May act as a 'molecular matchmaker', a protein that promotes the formation of a stable complex between two or more DNA-binding proteins in an ATP-dependent manner without itself being part of a final effector complex. This is DNA mismatch repair protein MutL from Xanthomonas campestris pv. campestris (strain B100).